Here is a 249-residue protein sequence, read N- to C-terminus: Methylthioribulose-1-phosphate dehydratase (249 aa).

Residues His103 and His105 each contribute to the Zn(2+) site.

Belongs to the aldolase class II family. MtnB subfamily. It depends on Zn(2+) as a cofactor.

It catalyses the reaction 5-(methylsulfanyl)-D-ribulose 1-phosphate = 5-methylsulfanyl-2,3-dioxopentyl phosphate + H2O. The protein operates within amino-acid biosynthesis; L-methionine biosynthesis via salvage pathway; L-methionine from S-methyl-5-thio-alpha-D-ribose 1-phosphate: step 2/6. In terms of biological role, catalyzes the dehydration of methylthioribulose-1-phosphate (MTRu-1-P) into 2,3-diketo-5-methylthiopentyl-1-phosphate (DK-MTP-1-P). This Leptospira interrogans serogroup Icterohaemorrhagiae serovar Lai (strain 56601) protein is Methylthioribulose-1-phosphate dehydratase.